Reading from the N-terminus, the 539-residue chain is Chaperonin GroEL (539 aa).

ATP contacts are provided by residues 29 to 32, 86 to 90, glycine 413, and aspartate 492; these read TLGP and DGTTT.

It belongs to the chaperonin (HSP60) family. In terms of assembly, forms a cylinder of 14 subunits composed of two heptameric rings stacked back-to-back. Interacts with the co-chaperonin GroES.

Its subcellular location is the cytoplasm. The enzyme catalyses ATP + H2O + a folded polypeptide = ADP + phosphate + an unfolded polypeptide.. Its function is as follows. Together with its co-chaperonin GroES, plays an essential role in assisting protein folding. The GroEL-GroES system forms a nano-cage that allows encapsulation of the non-native substrate proteins and provides a physical environment optimized to promote and accelerate protein folding. The protein is Chaperonin GroEL of Fusobacterium nucleatum subsp. polymorphum (Fusobacterium polymorphum).